The sequence spans 875 residues: Peptidyl-glycine alpha-amidating monooxygenase B (875 aa).

The first 39 residues, 1 to 39 (MDMASLISSLLVLFLIFQNSCYCFRSPLSVFKRYEESTR), serve as a signal peptide directing secretion. The tract at residues 3-394 (MASLISSLLV…KREEEEVLNQ (392 aa)) is peptidylglycine alpha-hydroxylating monooxygenase. At 40-763 (SLSNDCLGTT…PSVVQESSAG (724 aa)) the chain is on the intragranular side. 5 cysteine pairs are disulfide-bonded: Cys-45-Cys-184, Cys-79-Cys-124, Cys-112-Cys-129, Cys-225-Cys-332, and Cys-291-Cys-313. The Cu(2+) site is built by His-105 and His-106. Cu(2+) is bound by residues His-170, His-240, His-242, and Met-312. The interval 395 to 716 (DVHLEEDTDW…SPSKAEHRSV (322 aa)) is peptidyl-alpha-hydroxyglycine alpha-amidating lyase. Residue Arg-430 participates in a protein binding. Asn-465 carries an N-linked (GlcNAc...) asparagine glycan. NHL repeat units lie at residues 467-508 (SKVL…VGAE), 516-561 (LGRA…FSPN), and 569-613 (GEET…FHAK). 2 disulfides stabilise this stretch: Cys-530/Cys-551 and Cys-598/Cys-609. Residues Tyr-550 and Arg-602 each coordinate a protein. N-linked (GlcNAc...) asparagine glycosylation is present at Asn-662. The stretch at 666–709 (GDILDTFIPARKNFEMPHDIAAGDDGTVYVGDAHANAVWKFSPS) is one NHL 4 repeat. Positions 735-755 (HMRSRPKTNESVGQQTQEKPS) are disordered. N-linked (GlcNAc...) asparagine glycosylation occurs at Asn-743. Residues 743-755 (NESVGQQTQEKPS) show a composition bias toward polar residues. A helical transmembrane segment spans residues 764–787 (VSFVLIITLLIIPVVVLIAIAIFI). Residues 788 to 875 (RWRKVRMYGG…APPIPPVSSS (88 aa)) lie on the Cytoplasmic side of the membrane. The segment at 837 to 875 (KGFDRLSTEGSDQEKDDDDDGSDSEEEYSAPPIPPVSSS) is disordered. The segment covering 850 to 864 (EKDDDDDGSDSEEEY) has biased composition (acidic residues).

It in the C-terminal section; belongs to the peptidyl-alpha-hydroxyglycine alpha-amidating lyase family. The protein in the N-terminal section; belongs to the copper type II ascorbate-dependent monooxygenase family. As to quaternary structure, monomer. Zn(2+) is required as a cofactor. The cofactor is Cu(2+).

Its subcellular location is the cytoplasmic vesicle. The protein resides in the secretory vesicle membrane. It catalyses the reaction a [peptide]-C-terminal glycine + 2 L-ascorbate + O2 = a [peptide]-C-terminal (2S)-2-hydroxyglycine + 2 monodehydro-L-ascorbate radical + H2O. The catalysed reaction is a [peptide]-C-terminal (2S)-2-hydroxyglycine = a [peptide]-C-terminal amide + glyoxylate. Bifunctional enzyme that catalyzes amidation of the C-terminus of proteins. Alpha-amidation is present at the C-terminus of many endocrine hormones and neuropeptides and is required for their activity. C-terminal amidation also takes place in response to protein fragmentation triggered by oxidative stress, promoting degradation of amidated protein fragments by the proteasome. Alpha-amidation involves two sequential reactions, both of which are catalyzed by separate catalytic domains of the enzyme. The first step, catalyzed by peptidyl alpha-hydroxylating monooxygenase (PHM) domain, is the copper-, ascorbate-, and O2- dependent stereospecific hydroxylation (with S stereochemistry) at the alpha-carbon (C-alpha) of the C-terminal glycine of the peptidylglycine substrate. The second step, catalyzed by the peptidylglycine amidoglycolate lyase (PAL) domain, is the zinc-dependent cleavage of the N-C-alpha bond, producing the alpha-amidated peptide and glyoxylate. The chain is Peptidyl-glycine alpha-amidating monooxygenase B (pam-b) from Xenopus laevis (African clawed frog).